We begin with the raw amino-acid sequence, 367 residues long: 2'-5'-oligoadenylate synthase 1A (367 aa).

Residues 14 to 61 (DKFIEDYLLPDTTFGADVKSAVNVVCDFLKERCFQGAAHPVRVSKVVK) are interaction with dsRNA. S64 contributes to the ATP binding site. Positions 76, 78, and 149 each coordinate Mg(2+). The tract at residues 201–211 (QRPTKLKSLIR) is interaction with dsRNA. The ATP site is built by R211, K214, and Q231. C364 is lipidated: S-geranylgeranyl cysteine.

This sequence belongs to the 2-5A synthase family. As to quaternary structure, monomer. Homotetramer. Interacts with OAS1D; the interaction inhibits OAS1A catalytic activity. Requires Mg(2+) as cofactor. In terms of processing, C-terminal prenylated. In terms of tissue distribution, expressed in oocytes and granulosa cells of ovary, in intestine, stomach, spleen and uterus (at protein level). Expressed at high levels in the digestive tract and lymphoid organs. Expressed in ovary and spleen.

It localises to the cytoplasm. It is found in the mitochondrion. Its subcellular location is the nucleus. The protein localises to the microsome. The protein resides in the endoplasmic reticulum. It catalyses the reaction 3 ATP = 5'-triphosphoadenylyl-(2'-&gt;5')-adenylyl-(2'-&gt;5')-adenosine + 2 diphosphate. Produced as a latent enzyme which is activated by dsRNA generated during the course of viral infection. The dsRNA activator must be at least 15 nucleotides long, and no modification of the 2'-hydroxyl group is tolerated. ssRNA or dsDNA do not act as activators. In terms of biological role, interferon-induced, dsRNA-activated antiviral enzyme which plays a critical role in cellular innate antiviral response. In addition, it may also play a role in other cellular processes such as apoptosis, cell growth, differentiation and gene regulation. Synthesizes higher oligomers of 2'-5'-oligoadenylates (2-5A) from ATP which then bind to the inactive monomeric form of ribonuclease L (RNase L) leading to its dimerization and subsequent activation. Activation of RNase L leads to degradation of cellular as well as viral RNA, resulting in the inhibition of protein synthesis, thus terminating viral replication. Can mediate the antiviral effect via the classical RNase L-dependent pathway or an alternative antiviral pathway independent of RNase L. This is 2'-5'-oligoadenylate synthase 1A (Oas1a) from Mus musculus (Mouse).